The primary structure comprises 309 residues: NAD-dependent protein deacylase sirtuin-5A, mitochondrial (309 aa).

Residues 1 to 35 (MILLTFHTRRLVSHAYCGLKPASQKKSIALEMTRP) constitute a mitochondrion transit peptide. One can recognise a Deacetylase sirtuin-type domain in the interval 36–306 (SSNLADFREA…PPALARHETE (271 aa)). Residue 57–76 (GAGVSAESGVPTFRGAGGYW) coordinates NAD(+). Residues Y101 and R104 each contribute to the substrate site. Residue 139–142 (QNID) participates in NAD(+) binding. H157 serves as the catalytic Proton acceptor. Zn(2+) is bound by residues C165, C168, C206, and C211. NAD(+) is bound by residues 248-250 (GTS), 274-276 (NME), and C292.

This sequence belongs to the sirtuin family. Class III subfamily. Zn(2+) is required as a cofactor.

The protein localises to the mitochondrion. It localises to the cytoplasm. The protein resides in the cytosol. It is found in the nucleus. The catalysed reaction is N(6)-malonyl-L-lysyl-[protein] + NAD(+) + H2O = 2''-O-malonyl-ADP-D-ribose + nicotinamide + L-lysyl-[protein]. It carries out the reaction N(6)-succinyl-L-lysyl-[protein] + NAD(+) + H2O = 2''-O-succinyl-ADP-D-ribose + nicotinamide + L-lysyl-[protein]. It catalyses the reaction N(6)-glutaryl-L-lysyl-[protein] + NAD(+) + H2O = 2''-O-glutaryl-ADP-D-ribose + nicotinamide + L-lysyl-[protein]. NAD-dependent lysine demalonylase, desuccinylase and deglutarylase that specifically removes malonyl, succinyl and glutaryl groups on target proteins. Has weak NAD-dependent protein deacetylase activity; however this activity may not be physiologically relevant in vivo. The protein is NAD-dependent protein deacylase sirtuin-5A, mitochondrial (sirt5-a) of Xenopus laevis (African clawed frog).